The primary structure comprises 172 residues: Ribosome maturation factor RimM (172 aa).

One can recognise a PRC barrel domain in the interval 100-172 (PGEYYRVDLV…RIVVDWDPGF (73 aa)).

This sequence belongs to the RimM family. As to quaternary structure, binds ribosomal protein uS19.

It is found in the cytoplasm. An accessory protein needed during the final step in the assembly of 30S ribosomal subunit, possibly for assembly of the head region. Essential for efficient processing of 16S rRNA. May be needed both before and after RbfA during the maturation of 16S rRNA. It has affinity for free ribosomal 30S subunits but not for 70S ribosomes. This chain is Ribosome maturation factor RimM, found in Methylococcus capsulatus (strain ATCC 33009 / NCIMB 11132 / Bath).